The chain runs to 279 residues: MTERFDCHHCNESLYGKKYILKEENPHCVACFEELYANTCEECGTPIGCDCKDLSYKDRHWHEGCFHCSRCGSSLVDKPFAAKEEQLLCTDCYSNEYSSKCQECKKTIMPGTRKMEYKGSSWHETCFTCQRCQQPIGTKSFIPKENQNFCVPCYEKQYALQCVQCKKPITTGGVTYREQPWHKECFVCTACKKQLSGQRFTARDEFPYCLTCFCDLYAKKCAGCTNPISGLGGTKYISFEERQWHNDCFNCKKCSLSLVGRGFLTERDDILCPDCGKDI.

The segment at 7-31 (CHHCNESLYGKKYILKEENPHCVAC) adopts a C4-type zinc-finger fold. 3 consecutive LIM zinc-binding domains span residues 40-92 (CEEC…CTDC), 101-153 (CQEC…CVPC), and 162-212 (CVQC…CLTC). Residue K78 forms a Glycyl lysine isopeptide (Lys-Gly) (interchain with G-Cter in SUMO2) linkage. Residues K167 and K220 each participate in a glycyl lysine isopeptide (Lys-Gly) (interchain with G-Cter in SUMO2) cross-link. The LIM zinc-binding 4 domain maps to 221–275 (CAGCTNPISGLGGTKYISFEERQWHNDCFNCKKCSLSLVGRGFLTERDDILCPDC). S238 carries the phosphoserine modification.

In terms of assembly, interacts with ZNF638 and TTN/titin. Interacts with E4F1. Interacts with GRB7. Interacts with SIRT1 and FOXO1. Interacts with CEFIP. Interacts with calcineurin. Interacts with FOXK1. As to expression, highly expressed in heart but also detectable in brain and skeletal muscle.

It localises to the cytoplasm. The protein resides in the nucleus. The protein localises to the myofibril. It is found in the sarcomere. Its subcellular location is the z line. May function as a molecular transmitter linking various signaling pathways to transcriptional regulation. Negatively regulates the transcriptional repressor E4F1 and may function in cell growth. Inhibits the transcriptional activity of FOXO1 and its apoptotic function by enhancing the interaction of FOXO1 with SIRT1 and FOXO1 deacetylation. Negatively regulates the calcineurin/NFAT signaling pathway in cardiomyocytes. The chain is Four and a half LIM domains protein 2 (Fhl2) from Mus musculus (Mouse).